The sequence spans 132 residues: Glycine cleavage system H protein (132 aa).

A Lipoyl-binding domain is found at 24-106 (TVRVGLTDFA…YGAGWLLDVH (83 aa)). An N6-lipoyllysine modification is found at K65.

It belongs to the GcvH family. In terms of assembly, the glycine cleavage system is composed of four proteins: P, T, L and H. (R)-lipoate serves as cofactor.

Its function is as follows. The glycine cleavage system catalyzes the degradation of glycine. The H protein shuttles the methylamine group of glycine from the P protein to the T protein. The protein is Glycine cleavage system H protein of Mycobacterium leprae (strain Br4923).